The primary structure comprises 340 residues: Anthocyanidin reductase (340 aa).

NADP(+) is bound by residues Lys-49 and Tyr-169.

This sequence belongs to the NAD(P)-dependent epimerase/dehydratase family. Dihydroflavonol-4-reductase subfamily. As to quaternary structure, homo- or heterodimer. As to expression, flowers and young siliques. Detected specifically in the endothelium of seed coat.

It carries out the reaction a (2R,3R)-flavan-3-ol + 2 NAD(+) = an anthocyanidin with a 3-hydroxy group + 2 NADH + 2 H(+). The catalysed reaction is a (2R,3R)-flavan-3-ol + 2 NADP(+) = an anthocyanidin with a 3-hydroxy group + 2 NADPH + 2 H(+). Its pathway is secondary metabolite biosynthesis; flavonoid biosynthesis. Its activity is regulated as follows. Inhibited by (+)-catechin, quercetin and (+)- and (-)-dihydroquercetin. Not inhibited by salt. Positive cooperativity with NADPH acting as cosubstrate and modulator. In terms of biological role, involved in the biosynthesis of condensed tannins. Converts cyanidin into (-)-epicatechin as the major product. The polypeptide is Anthocyanidin reductase (BAN) (Arabidopsis thaliana (Mouse-ear cress)).